Consider the following 361-residue polypeptide: MAEPSLVAAGEEPEERAIEAALRPKNLDDFVGQHRVRKQLSLVLKASRMRGRSADHVLFSGPPGLGKTTLAMIVAAEMNAPLRISSGPAIQHAGDLAAILSSLSEGEVLFLDEIHRMSRPAEEMLYMAMEDFRVDIVVGKGAGATAIPLELPPFTLVGATTRAGLLPGPLRDRFGFTGHLEFYSVPELELVLRRSAGLLDLKVNSAGFSEIAGRSRGTPRIANRLLRRVRDWALVHGVDQIDARSASAALDMYEVDKKGLDRLDRSVLEALITKFGGGPVGLSTLAIAVGEETETVETVAEPFLVREGLLGRTPRGRIAMAPAWTHLGYAIPAGVFGQEQLDLFDRETGAEVTGEWAPESQ.

The large ATPase domain (RuvB-L) stretch occupies residues 1-183 (MAEPSLVAAG…FGFTGHLEFY (183 aa)). Residues Leu-22, Arg-23, Gly-64, Lys-67, Thr-68, Thr-69, 130 to 132 (EDF), Arg-173, Tyr-183, and Arg-220 contribute to the ATP site. Thr-68 is a Mg(2+) binding site. Positions 184–254 (SVPELELVLR…SASAALDMYE (71 aa)) are small ATPAse domain (RuvB-S). The interval 257-361 (KKGLDRLDRS…VTGEWAPESQ (105 aa)) is head domain (RuvB-H). Residues Arg-312 and Arg-317 each coordinate DNA.

It belongs to the RuvB family. As to quaternary structure, homohexamer. Forms an RuvA(8)-RuvB(12)-Holliday junction (HJ) complex. HJ DNA is sandwiched between 2 RuvA tetramers; dsDNA enters through RuvA and exits via RuvB. An RuvB hexamer assembles on each DNA strand where it exits the tetramer. Each RuvB hexamer is contacted by two RuvA subunits (via domain III) on 2 adjacent RuvB subunits; this complex drives branch migration. In the full resolvosome a probable DNA-RuvA(4)-RuvB(12)-RuvC(2) complex forms which resolves the HJ.

It is found in the cytoplasm. The enzyme catalyses ATP + H2O = ADP + phosphate + H(+). Functionally, the RuvA-RuvB-RuvC complex processes Holliday junction (HJ) DNA during genetic recombination and DNA repair, while the RuvA-RuvB complex plays an important role in the rescue of blocked DNA replication forks via replication fork reversal (RFR). RuvA specifically binds to HJ cruciform DNA, conferring on it an open structure. The RuvB hexamer acts as an ATP-dependent pump, pulling dsDNA into and through the RuvAB complex. RuvB forms 2 homohexamers on either side of HJ DNA bound by 1 or 2 RuvA tetramers; 4 subunits per hexamer contact DNA at a time. Coordinated motions by a converter formed by DNA-disengaged RuvB subunits stimulates ATP hydrolysis and nucleotide exchange. Immobilization of the converter enables RuvB to convert the ATP-contained energy into a lever motion, pulling 2 nucleotides of DNA out of the RuvA tetramer per ATP hydrolyzed, thus driving DNA branch migration. The RuvB motors rotate together with the DNA substrate, which together with the progressing nucleotide cycle form the mechanistic basis for DNA recombination by continuous HJ branch migration. Branch migration allows RuvC to scan DNA until it finds its consensus sequence, where it cleaves and resolves cruciform DNA. The chain is Holliday junction branch migration complex subunit RuvB from Pseudarthrobacter chlorophenolicus (strain ATCC 700700 / DSM 12829 / CIP 107037 / JCM 12360 / KCTC 9906 / NCIMB 13794 / A6) (Arthrobacter chlorophenolicus).